A 343-amino-acid polypeptide reads, in one-letter code: 3-dehydroquinate synthase (343 aa).

NAD(+) contacts are provided by residues 61-66, 95-99, 119-120, K132, K141, and 159-162; these read SGEKYK, GVISD, TT, and FLKT. Zn(2+) is bound by residues E174, H231, and H248.

The protein belongs to the sugar phosphate cyclases superfamily. Dehydroquinate synthase family. The cofactor is Co(2+). Requires Zn(2+) as cofactor. It depends on NAD(+) as a cofactor.

The protein localises to the cytoplasm. It catalyses the reaction 7-phospho-2-dehydro-3-deoxy-D-arabino-heptonate = 3-dehydroquinate + phosphate. It functions in the pathway metabolic intermediate biosynthesis; chorismate biosynthesis; chorismate from D-erythrose 4-phosphate and phosphoenolpyruvate: step 2/7. Functionally, catalyzes the conversion of 3-deoxy-D-arabino-heptulosonate 7-phosphate (DAHP) to dehydroquinate (DHQ). This is 3-dehydroquinate synthase from Helicobacter pylori (strain P12).